Here is a 509-residue protein sequence, read N- to C-terminus: Bifunctional purine biosynthesis protein PurH (509 aa).

Positions 1 to 144 (MKRALISVSD…KNYAAVTVVV (144 aa)) constitute an MGS-like domain.

The protein belongs to the PurH family.

It catalyses the reaction (6R)-10-formyltetrahydrofolate + 5-amino-1-(5-phospho-beta-D-ribosyl)imidazole-4-carboxamide = 5-formamido-1-(5-phospho-D-ribosyl)imidazole-4-carboxamide + (6S)-5,6,7,8-tetrahydrofolate. It carries out the reaction IMP + H2O = 5-formamido-1-(5-phospho-D-ribosyl)imidazole-4-carboxamide. The protein operates within purine metabolism; IMP biosynthesis via de novo pathway; 5-formamido-1-(5-phospho-D-ribosyl)imidazole-4-carboxamide from 5-amino-1-(5-phospho-D-ribosyl)imidazole-4-carboxamide (10-formyl THF route): step 1/1. It participates in purine metabolism; IMP biosynthesis via de novo pathway; IMP from 5-formamido-1-(5-phospho-D-ribosyl)imidazole-4-carboxamide: step 1/1. The sequence is that of Bifunctional purine biosynthesis protein PurH from Listeria monocytogenes serotype 4b (strain F2365).